Reading from the N-terminus, the 157-residue chain is Cytochrome c-type biogenesis protein CcmE (157 aa).

The Cytoplasmic segment spans residues 1 to 8 (MNPLRRKR). The chain crosses the membrane as a helical; Signal-anchor for type II membrane protein span at residues 9 to 29 (LLIILAVLGGVGLALTLALSA). Topologically, residues 30-157 (LKENINLFYT…ASMPARQADR (128 aa)) are periplasmic. Histidine 124 and tyrosine 128 together coordinate heme. A disordered region spans residues 132-157 (EVSKALRESGQATPAPASMPARQADR).

Belongs to the CcmE/CycJ family.

It localises to the cell inner membrane. Functionally, heme chaperone required for the biogenesis of c-type cytochromes. Transiently binds heme delivered by CcmC and transfers the heme to apo-cytochromes in a process facilitated by CcmF and CcmH. This Pseudomonas syringae pv. tomato (strain ATCC BAA-871 / DC3000) protein is Cytochrome c-type biogenesis protein CcmE.